The primary structure comprises 397 residues: Sulfate adenylyltransferase (397 aa).

It belongs to the sulfate adenylyltransferase family.

The enzyme catalyses sulfate + ATP + H(+) = adenosine 5'-phosphosulfate + diphosphate. It participates in sulfur metabolism; hydrogen sulfide biosynthesis; sulfite from sulfate: step 1/3. The sequence is that of Sulfate adenylyltransferase (sat) from Allochromatium vinosum (strain ATCC 17899 / DSM 180 / NBRC 103801 / NCIMB 10441 / D) (Chromatium vinosum).